A 586-amino-acid chain; its full sequence is Glutamate--tRNA ligase (586 aa).

The tract at residues Leu-84–Gln-111 is disordered. Residues Thr-85 to Asp-94 are compositionally biased toward acidic residues. The 'HIGH' region motif lies at Pro-119–His-129.

It belongs to the class-I aminoacyl-tRNA synthetase family. Glutamate--tRNA ligase type 2 subfamily.

The protein resides in the cytoplasm. It carries out the reaction tRNA(Glu) + L-glutamate + ATP = L-glutamyl-tRNA(Glu) + AMP + diphosphate. Its function is as follows. Catalyzes the attachment of glutamate to tRNA(Glu) in a two-step reaction: glutamate is first activated by ATP to form Glu-AMP and then transferred to the acceptor end of tRNA(Glu). This Haloquadratum walsbyi (strain DSM 16790 / HBSQ001) protein is Glutamate--tRNA ligase.